Here is a 160-residue protein sequence, read N- to C-terminus: Cytochrome b6-f complex subunit 4 (160 aa).

Transmembrane regions (helical) follow at residues 36 to 56, 95 to 115, and 131 to 151; these read LLYI…GLAV, LLGV…PFLE, and TVFL…TLPI.

Belongs to the cytochrome b family. PetD subfamily. The 4 large subunits of the cytochrome b6-f complex are cytochrome b6, subunit IV (17 kDa polypeptide, petD), cytochrome f and the Rieske protein, while the 4 small subunits are petG, petL, petM and petN. The complex functions as a dimer.

The protein resides in the plastid. It localises to the chloroplast thylakoid membrane. Component of the cytochrome b6-f complex, which mediates electron transfer between photosystem II (PSII) and photosystem I (PSI), cyclic electron flow around PSI, and state transitions. The sequence is that of Cytochrome b6-f complex subunit 4 from Oryza sativa (Rice).